The primary structure comprises 81 residues: Exodeoxyribonuclease 7 small subunit (81 aa).

The protein belongs to the XseB family. Heterooligomer composed of large and small subunits.

It localises to the cytoplasm. The catalysed reaction is Exonucleolytic cleavage in either 5'- to 3'- or 3'- to 5'-direction to yield nucleoside 5'-phosphates.. Bidirectionally degrades single-stranded DNA into large acid-insoluble oligonucleotides, which are then degraded further into small acid-soluble oligonucleotides. The protein is Exodeoxyribonuclease 7 small subunit of Pseudomonas syringae pv. syringae (strain B728a).